The following is a 181-amino-acid chain: NADH-quinone oxidoreductase subunit I (181 aa).

2 consecutive 4Fe-4S ferredoxin-type domains span residues 51 to 80 and 90 to 119; these read TRNS…LKKS and KSFQ…LTPD. Positions 60, 63, 66, 70, 99, 102, 105, and 109 each coordinate [4Fe-4S] cluster.

Belongs to the complex I 23 kDa subunit family. As to quaternary structure, NDH-1 is composed of 13 different subunits. Subunits NuoA, H, J, K, L, M, N constitute the membrane sector of the complex. [4Fe-4S] cluster serves as cofactor.

It localises to the cell membrane. The catalysed reaction is a quinone + NADH + 5 H(+)(in) = a quinol + NAD(+) + 4 H(+)(out). Its function is as follows. NDH-1 shuttles electrons from NADH, via FMN and iron-sulfur (Fe-S) centers, to quinones in the respiratory chain. The immediate electron acceptor for the enzyme in this species is believed to be ubiquinone. Couples the redox reaction to proton translocation (for every two electrons transferred, four hydrogen ions are translocated across the cytoplasmic membrane), and thus conserves the redox energy in a proton gradient. This is NADH-quinone oxidoreductase subunit I from Buchnera aphidicola subsp. Cinara cedri (strain Cc).